A 31-amino-acid chain; its full sequence is U8-ctenitoxin-Co1a (31 aa).

Intrachain disulfides connect Cys4–Cys18 and Cys11–Cys24.

In terms of tissue distribution, expressed by the venom gland.

It localises to the secreted. Blocks voltage-gated sodium channels (Nav). In Ctenus ornatus (Brazilian spider), this protein is U8-ctenitoxin-Co1a.